The primary structure comprises 408 residues: Peptidase T (408 aa).

H78 provides a ligand contact to Zn(2+). The active site involves D80. D140 contacts Zn(2+). E173 functions as the Proton acceptor in the catalytic mechanism. Residues E174, D196, and H379 each coordinate Zn(2+).

Belongs to the peptidase M20B family. Zn(2+) is required as a cofactor.

The protein localises to the cytoplasm. The catalysed reaction is Release of the N-terminal residue from a tripeptide.. In terms of biological role, cleaves the N-terminal amino acid of tripeptides. The polypeptide is Peptidase T (Escherichia coli (strain K12 / MC4100 / BW2952)).